A 436-amino-acid polypeptide reads, in one-letter code: 3-ketoacyl-CoA thiolase (436 aa).

Cys-99 acts as the Acyl-thioester intermediate in catalysis. Residues His-392 and Cys-422 each act as proton acceptor in the active site.

It belongs to the thiolase-like superfamily. Thiolase family. As to quaternary structure, heterotetramer of two alpha chains (FadJ) and two beta chains (FadI).

Its subcellular location is the cytoplasm. The enzyme catalyses an acyl-CoA + acetyl-CoA = a 3-oxoacyl-CoA + CoA. Its pathway is lipid metabolism; fatty acid beta-oxidation. In terms of biological role, catalyzes the final step of fatty acid oxidation in which acetyl-CoA is released and the CoA ester of a fatty acid two carbons shorter is formed. In Enterobacter sp. (strain 638), this protein is 3-ketoacyl-CoA thiolase.